The following is a 415-amino-acid chain: Gamma-glutamyl phosphate reductase (415 aa).

It belongs to the gamma-glutamyl phosphate reductase family.

The protein localises to the cytoplasm. It carries out the reaction L-glutamate 5-semialdehyde + phosphate + NADP(+) = L-glutamyl 5-phosphate + NADPH + H(+). Its pathway is amino-acid biosynthesis; L-proline biosynthesis; L-glutamate 5-semialdehyde from L-glutamate: step 2/2. Functionally, catalyzes the NADPH-dependent reduction of L-glutamate 5-phosphate into L-glutamate 5-semialdehyde and phosphate. The product spontaneously undergoes cyclization to form 1-pyrroline-5-carboxylate. The polypeptide is Gamma-glutamyl phosphate reductase (Mycolicibacterium gilvum (strain PYR-GCK) (Mycobacterium gilvum (strain PYR-GCK))).